The following is a 42-amino-acid chain: Delta-hexatoxin-Ar1a (42 aa).

Disulfide bonds link C1-C15, C8-C20, C14-C31, and C16-C42.

It belongs to the neurotoxin 06 (delta-actx) family. As to expression, expressed by the venom gland.

Its subcellular location is the secreted. Functionally, inhibits tetrodotoxin-sensitive voltage-gated sodium channels (Nav) by binding to site 3. It slows the inactivation, causes a prolongation of action potential duration resulting in repetitive firing in autonomic and motor nerve fibers. Does not depolarize the resting potential. Does not affect tetrodotoxin-resistant sodium channels. This lethal neurotoxin is active on both insect and mammalian voltage-gated sodium channels. This chain is Delta-hexatoxin-Ar1a, found in Atrax robustus (Sydney funnel-web spider).